Consider the following 581-residue polypeptide: Proline--tRNA ligase (581 aa).

The protein belongs to the class-II aminoacyl-tRNA synthetase family. ProS type 1 subfamily. Homodimer.

It localises to the cytoplasm. The enzyme catalyses tRNA(Pro) + L-proline + ATP = L-prolyl-tRNA(Pro) + AMP + diphosphate. Functionally, catalyzes the attachment of proline to tRNA(Pro) in a two-step reaction: proline is first activated by ATP to form Pro-AMP and then transferred to the acceptor end of tRNA(Pro). As ProRS can inadvertently accommodate and process non-cognate amino acids such as alanine and cysteine, to avoid such errors it has two additional distinct editing activities against alanine. One activity is designated as 'pretransfer' editing and involves the tRNA(Pro)-independent hydrolysis of activated Ala-AMP. The other activity is designated 'posttransfer' editing and involves deacylation of mischarged Ala-tRNA(Pro). The misacylated Cys-tRNA(Pro) is not edited by ProRS. This Chlamydia trachomatis serovar D (strain ATCC VR-885 / DSM 19411 / UW-3/Cx) protein is Proline--tRNA ligase.